A 267-amino-acid polypeptide reads, in one-letter code: NAD kinase (267 aa).

D45 serves as the catalytic Proton acceptor. NAD(+) contacts are provided by residues 45–46 (DG), 122–123 (NE), R148, D150, 161–166 (TAYNKS), A185, and Q223.

The protein belongs to the NAD kinase family. A divalent metal cation is required as a cofactor.

It localises to the cytoplasm. The enzyme catalyses NAD(+) + ATP = ADP + NADP(+) + H(+). In terms of biological role, involved in the regulation of the intracellular balance of NAD and NADP, and is a key enzyme in the biosynthesis of NADP. Catalyzes specifically the phosphorylation on 2'-hydroxyl of the adenosine moiety of NAD to yield NADP. This is NAD kinase from Levilactobacillus brevis (strain ATCC 367 / BCRC 12310 / CIP 105137 / JCM 1170 / LMG 11437 / NCIMB 947 / NCTC 947) (Lactobacillus brevis).